The primary structure comprises 290 residues: uncharacterized protein (290 aa).

The HTH lysR-type domain occupies 1–61; sequence MVMNMNHLHI…RDKHHGLMLT (61 aa). The H-T-H motif DNA-binding region spans 20 to 39; the sequence is ITEAAKELFISQPAVSKAIK.

This sequence belongs to the LysR transcriptional regulatory family.

This is an uncharacterized protein from Bacillus subtilis (strain 168).